The chain runs to 260 residues: 3-methyl-2-oxobutanoate hydroxymethyltransferase (260 aa).

The Mg(2+) site is built by Asp44 and Asp83. Residues 44-45, Asp83, and Lys113 contribute to the 3-methyl-2-oxobutanoate site; that span reads DS. Position 115 (Glu115) interacts with Mg(2+). Residue Glu182 is the Proton acceptor of the active site.

The protein belongs to the PanB family. Homodecamer; pentamer of dimers. The cofactor is Mg(2+).

Its subcellular location is the cytoplasm. The enzyme catalyses 3-methyl-2-oxobutanoate + (6R)-5,10-methylene-5,6,7,8-tetrahydrofolate + H2O = 2-dehydropantoate + (6S)-5,6,7,8-tetrahydrofolate. It functions in the pathway cofactor biosynthesis; (R)-pantothenate biosynthesis; (R)-pantoate from 3-methyl-2-oxobutanoate: step 1/2. Functionally, catalyzes the reversible reaction in which hydroxymethyl group from 5,10-methylenetetrahydrofolate is transferred onto alpha-ketoisovalerate to form ketopantoate. This is 3-methyl-2-oxobutanoate hydroxymethyltransferase from Synechocystis sp. (strain ATCC 27184 / PCC 6803 / Kazusa).